A 508-amino-acid chain; its full sequence is Photosystem II CP47 reaction center protein (508 aa).

The next 6 membrane-spanning stretches (helical) occupy residues 21–36 (AVHI…WAGS), 101–115 (IVFS…IWHW), 140–156 (GIHL…FGAF), 203–218 (IAAG…FHLS), 237–252 (VLSS…AFVV), and 457–472 (SFAL…HGSR).

It belongs to the PsbB/PsbC family. PsbB subfamily. In terms of assembly, PSII is composed of 1 copy each of membrane proteins PsbA, PsbB, PsbC, PsbD, PsbE, PsbF, PsbH, PsbI, PsbJ, PsbK, PsbL, PsbM, PsbT, PsbX, PsbY, PsbZ, Psb30/Ycf12, at least 3 peripheral proteins of the oxygen-evolving complex and a large number of cofactors. It forms dimeric complexes. The cofactor is Binds multiple chlorophylls. PSII binds additional chlorophylls, carotenoids and specific lipids..

Its subcellular location is the plastid. The protein resides in the chloroplast thylakoid membrane. Functionally, one of the components of the core complex of photosystem II (PSII). It binds chlorophyll and helps catalyze the primary light-induced photochemical processes of PSII. PSII is a light-driven water:plastoquinone oxidoreductase, using light energy to abstract electrons from H(2)O, generating O(2) and a proton gradient subsequently used for ATP formation. The polypeptide is Photosystem II CP47 reaction center protein (Lotus japonicus (Lotus corniculatus var. japonicus)).